The sequence spans 345 residues: Nuclear distribution protein nudE-like 1-A (345 aa).

Residues 19 to 190 (WRELSKRLKQ…LAVRERQTDG (172 aa)) adopt a coiled-coil conformation. The span at 182-192 (AVRERQTDGTR) shows a compositional bias: basic and acidic residues. Disordered stretches follow at residues 182–206 (AVRE…CDKT) and 326–345 (PPGV…PLSV). Over residues 334–345 (PPSPPGMLPLSV) the composition is skewed to pro residues.

The protein belongs to the nudE family. Phosphorylated in mitosis.

Its subcellular location is the cytoplasm. It localises to the cytoskeleton. The protein resides in the microtubule organizing center. The protein localises to the centrosome. It is found in the spindle. Required for organization of the cellular microtubule array and microtubule anchoring at the centrosome. Positively regulates the activity of the minus-end directed microtubule motor protein dynein. May enhance dynein-mediated microtubule sliding by targeting dynein to the microtubule plus end. Positively regulates lysosome peripheral distribution and ruffled border formation in osteoclasts. In Xenopus laevis (African clawed frog), this protein is Nuclear distribution protein nudE-like 1-A (ndel1-a).